The following is an 89-amino-acid chain: Small ribosomal subunit protein uS15 (89 aa).

This sequence belongs to the universal ribosomal protein uS15 family. In terms of assembly, part of the 30S ribosomal subunit. Forms a bridge to the 50S subunit in the 70S ribosome, contacting the 23S rRNA.

Functionally, one of the primary rRNA binding proteins, it binds directly to 16S rRNA where it helps nucleate assembly of the platform of the 30S subunit by binding and bridging several RNA helices of the 16S rRNA. In terms of biological role, forms an intersubunit bridge (bridge B4) with the 23S rRNA of the 50S subunit in the ribosome. This chain is Small ribosomal subunit protein uS15, found in Ralstonia nicotianae (strain ATCC BAA-1114 / GMI1000) (Ralstonia solanacearum).